The sequence spans 561 residues: Asparagine synthetase [glutamine-hydrolyzing] (561 aa).

Cysteine 2 (for GATase activity) is an active-site residue. In terms of domain architecture, Glutamine amidotransferase type-2 spans 2–191 (CGIWALFGSD…PGHYEVLDLK (190 aa)). L-glutamine contacts are provided by residues 49 to 53 (RLAVV), 75 to 77 (NGE), and aspartate 97. The region spanning 213–536 (HALYDSVEKL…PGRADWLTHY (324 aa)) is the Asparagine synthetase domain. ATP-binding positions include leucine 256, isoleucine 288, and 363-364 (SG). Lysine 385 carries the N6-acetyllysine modification. Threonine 545 is subject to Phosphothreonine. Phosphoserine is present on serine 557.

The catalysed reaction is L-aspartate + L-glutamine + ATP + H2O = L-asparagine + L-glutamate + AMP + diphosphate + H(+). It functions in the pathway amino-acid biosynthesis; L-asparagine biosynthesis; L-asparagine from L-aspartate (L-Gln route): step 1/1. This chain is Asparagine synthetase [glutamine-hydrolyzing] (ASNS), found in Mesocricetus auratus (Golden hamster).